The primary structure comprises 315 residues: MDVGVTTAKSILEKPLKLLTEEDISQLTREDCRKFLKEKGMRRPSWNKSQAIQQVLSLKALYEPGDDSGAGILRKILVSQPPNPPRVTTTLIEPRNELEACGRIPLQEDDGACHRRDSPRSAEFSGSSGQFVADKDSHKTVSVSPRSPAETNAVVGQMTIFYSGKVNVYDGVPPEKARSIMHFAANPIDLPENGIFASSRMISKPMSKEKMVELPQYGLEKAPASRDSDVEGQANRKVSLQRYLEKRKDRRFSKTKKAPGVASSSLEMFLNRQPRMNAAYSQNLSGTGHCESPENQTKSPNISVDLNSDLNSEDN.

Residues 113 to 145 form a disordered region; sequence CHRRDSPRSAEFSGSSGQFVADKDSHKTVSVSP. A Tify domain is found at 151-186; that stretch reads TNAVVGQMTIFYSGKVNVYDGVPPEKARSIMHFAAN. The Jas signature appears at 233-260; the sequence is QANRKVSLQRYLEKRKDRRFSKTKKAPG. Residues 235 to 242 carry the Nuclear localization signal motif; the sequence is NRKVSLQR. A compositionally biased stretch (basic residues) spans 248-257; that stretch reads KDRRFSKTKK. Residues 248 to 315 form a disordered region; that stretch reads KDRRFSKTKK…LNSDLNSEDN (68 aa). The span at 293 to 315 shows a compositional bias: polar residues; the sequence is PENQTKSPNISVDLNSDLNSEDN.

It belongs to the TIFY/JAZ family. Interacts with AFPH2/NINJA.

Its subcellular location is the nucleus. In terms of biological role, regulates the arrest of dispersed meristematic cells during lamina development. The protein is Protein TIFY 4B (TIFY4B) of Arabidopsis thaliana (Mouse-ear cress).